The sequence spans 88 residues: Small ribosomal subunit protein bS16 (88 aa).

Belongs to the bacterial ribosomal protein bS16 family.

The polypeptide is Small ribosomal subunit protein bS16 (Anaeromyxobacter dehalogenans (strain 2CP-1 / ATCC BAA-258)).